The primary structure comprises 428 residues: Flotillin-2a (428 aa).

3 S-palmitoyl cysteine lipidation sites follow: Cys-4, Cys-19, and Cys-20.

Belongs to the band 7/mec-2 family. Flotillin subfamily. In terms of assembly, heterooligomer; Heterooligomerizes with ic complex of flotillins 1 and 2. In terms of processing, palmitoylation may be required for the formation of higher order complexes and for neurite outgrowth in cultured neural stem cells.

Its subcellular location is the membrane. It localises to the endosome. Its function is as follows. May play a role in axon growth and regeneration. May be involved in epidermal cell adhesion and epidermal structure and function. In Danio rerio (Zebrafish), this protein is Flotillin-2a (flot2a).